Consider the following 309-residue polypeptide: Homoserine kinase (309 aa).

91–101 (PIGSGLGSSAC) lines the ATP pocket.

Belongs to the GHMP kinase family. Homoserine kinase subfamily.

The protein resides in the cytoplasm. It catalyses the reaction L-homoserine + ATP = O-phospho-L-homoserine + ADP + H(+). The protein operates within amino-acid biosynthesis; L-threonine biosynthesis; L-threonine from L-aspartate: step 4/5. In terms of biological role, catalyzes the ATP-dependent phosphorylation of L-homoserine to L-homoserine phosphate. The chain is Homoserine kinase from Photorhabdus laumondii subsp. laumondii (strain DSM 15139 / CIP 105565 / TT01) (Photorhabdus luminescens subsp. laumondii).